The chain runs to 488 residues: pH-response regulator protein palC (488 aa).

Residues P2–V430 enclose the BRO1 domain. Residues P449–F488 are disordered.

It belongs to the palC family.

Functionally, required for the proteolytic cleavage of the transcription factor RIM101 in response to alkaline ambient pH. This is pH-response regulator protein palC from Cryptococcus neoformans var. neoformans serotype D (strain B-3501A) (Filobasidiella neoformans).